A 471-amino-acid polypeptide reads, in one-letter code: 5-hydroxytryptamine receptor 2B (471 aa).

Topologically, residues 1–26 are extracellular; sequence MFQAAVGPLQTNISLPEETPGLELNW. N-linked (GlcNAc...) asparagine glycosylation is present at asparagine 12. Residues 27-49 form a helical membrane-spanning segment; that stretch reads AALLIVMVIIPTIGGNILVILAV. Residues 50–60 lie on the Cytoplasmic side of the membrane; that stretch reads WLEKKLQNATN. The helical transmembrane segment at 61–83 threads the bilayer; that stretch reads FFLMSLAVADLLVGLLVMPIALI. Over 84-99 the chain is Extracellular; sequence TILYDSDWPLPEPLCP. The cysteines at positions 98 and 182 are disulfide-linked. Residues 100–121 traverse the membrane as a helical segment; sequence IWLFLDVLFSTASIMHLCAISL. Ergotamine-binding residues include aspartate 105 and threonine 110. The short motif at 122–124 is the DRY motif; important for ligand-induced conformation changes element; it reads DRY. At 122-141 the chain is on the cytoplasmic side; sequence DRYIAIKKPIQHSQYKSRAK. A helical transmembrane segment spans residues 142-162; sequence VMLKIALVWLISICIAIPIPI. Residues 163–191 lie on the Extracellular side of the membrane; sequence KGLRNYPHPNNITFTSNHTCVLKTDTFQE. 2 N-linked (GlcNAc...) asparagine glycosylation sites follow: asparagine 173 and asparagine 179. Leucine 184 provides a ligand contact to ergotamine. The [DE]RFG motif; may stabilize a conformation that preferentially activates signaling via beta-arrestin family members signature appears at 187 to 190; it reads DTFQ. A helical transmembrane segment spans residues 192–214; sequence FIIFGSLVAFFIPLTIMMIIYFL. At 215 to 308 the chain is on the cytoplasmic side; that stretch reads TVRVLRKKVY…TLTNEQRASK (94 aa). Residues 309–329 form a helical membrane-spanning segment; sequence VLGIVFLLFVVMWCPFFITNI. Residues 330–344 are Extracellular-facing; that stretch reads TSALCGPCDANIIGR. An intrachain disulfide couples cysteine 334 to cysteine 337. A helical membrane pass occupies residues 345–366; sequence LMEIFSWVGYVSSGINPLVYTL. The NPxxY motif; important for ligand-induced conformation changes and signaling motif lies at 360–364; the sequence is NPLVY. Over 367–471 the chain is Cytoplasmic; the sequence is FNKTFRQAFT…CKQEERVSCV (105 aa). Residue cysteine 381 is the site of S-palmitoyl cysteine attachment. The PDZ-binding signature appears at 469–471; that stretch reads SCV.

The protein belongs to the G-protein coupled receptor 1 family. Detected in brain, heart and gut.

The protein resides in the cell membrane. Its subcellular location is the synapse. The protein localises to the synaptosome. In terms of biological role, G-protein coupled receptor for 5-hydroxytryptamine (serotonin). Also functions as a receptor for various ergot alkaloid derivatives and psychoactive substances. Ligand binding causes a conformation change that triggers signaling via guanine nucleotide-binding proteins (G proteins) and modulates the activity of downstream effectors. HTR2B is coupled to G(q)/G(11) G alpha proteins and activates phospholipase C-beta, releasing diacylglycerol (DAG) and inositol 1,4,5-trisphosphate (IP3) second messengers that modulate the activity of phosphatidylinositol 3-kinase and promote the release of Ca(2+) ions from intracellular stores, respectively. Beta-arrestin family members inhibit signaling via G proteins and mediate activation of alternative signaling pathways. Plays a role in the regulation of dopamine and 5-hydroxytryptamine release, 5-hydroxytryptamine uptake and in the regulation of extracellular dopamine and 5-hydroxytryptamine levels, and thereby affects neural activity. In Dichotomyctere fluviatilis (Green pufferfish), this protein is 5-hydroxytryptamine receptor 2B (htr2b).